Here is a 134-residue protein sequence, read N- to C-terminus: Ribonuclease P protein component 2 (134 aa).

Belongs to the eukaryotic/archaeal RNase P protein component 2 family. Consists of a catalytic RNA component and at least 4-5 protein subunits. Forms a subcomplex with Rnp3 which stimulates the catalytic RNA.

It localises to the cytoplasm. The enzyme catalyses Endonucleolytic cleavage of RNA, removing 5'-extranucleotides from tRNA precursor.. In terms of biological role, part of ribonuclease P, a protein complex that generates mature tRNA molecules by cleaving their 5'-ends. This chain is Ribonuclease P protein component 2, found in Methanocaldococcus jannaschii (strain ATCC 43067 / DSM 2661 / JAL-1 / JCM 10045 / NBRC 100440) (Methanococcus jannaschii).